Here is a 1044-residue protein sequence, read N- to C-terminus: Multiple epidermal growth factor-like domains protein 11 (1044 aa).

The first 19 residues, M1 to A19, serve as a signal peptide directing secretion. Residues L20–S848 lie on the Extracellular side of the membrane. One can recognise an EMI domain in the interval D24–P101. Cystine bridges form between C28-C89, C54-C63, C88-C99, C103-C118, C120-C129, C146-C154, C148-C161, C163-C172, C185-C197, C191-C204, C206-C215, C228-C240, C234-C247, and C249-C258. EGF-like domains follow at residues S95–S130, S143–E173, H181–E216, H224–A259, F267–Q302, F310–Q345, Y399–A434, Y442–T477, and N490–E520. An N-linked (GlcNAc...) asparagine glycan is attached at N270. 15 disulfides stabilise this stretch: C271–C283, C277–C290, C292–C301, C314–C326, C320–C333, C335–C344, C403–C415, C409–C422, C424–C433, C446–C458, C452–C465, C467–C476, C493–C501, C495–C508, and C510–C519. N531 is a glycosylation site (N-linked (GlcNAc...) asparagine). 5 EGF-like domains span residues W571–Q606, F659–S694, F707–T737, G750–E780, and F788–D823. Intrachain disulfides connect C575-C587, C581-C594, C596-C605, C663-C675, C669-C682, C684-C693, C710-C718, C712-C725, C727-C736, C753-C761, C755-C768, C770-C779, C792-C804, C798-C811, and C813-C822. A helical transmembrane segment spans residues V849 to F869. The Cytoplasmic portion of the chain corresponds to A870 to S1044. Positions G1023 to S1044 are disordered. Over residues S1033–S1044 the composition is skewed to polar residues.

Belongs to the MEGF family. Homomer. Does not interact with MEGF10.

Its subcellular location is the cell membrane. It is found in the basolateral cell membrane. In terms of biological role, may regulate the mosaic spacing of specific neuron subtypes in the retina through homotypic retinal neuron repulsion. Mosaics provide a mechanism to distribute each cell type evenly across the retina, ensuring that all parts of the visual field have access to a full set of processing elements. In Homo sapiens (Human), this protein is Multiple epidermal growth factor-like domains protein 11 (MEGF11).